The sequence spans 145 residues: Heat shock protein hsp-16.2 (145 aa).

A sHSP domain is found at 32-137 (VCRISPSESS…QGRSIPIQQA (106 aa)).

This sequence belongs to the small heat shock protein (HSP20) family.

The polypeptide is Heat shock protein hsp-16.2 (Caenorhabditis elegans).